A 180-amino-acid polypeptide reads, in one-letter code: Cytidylate kinase (180 aa).

Residue 7–15 (GLPGSGTST) participates in ATP binding.

This sequence belongs to the cytidylate kinase family. Type 2 subfamily.

It is found in the cytoplasm. The catalysed reaction is CMP + ATP = CDP + ADP. It carries out the reaction dCMP + ATP = dCDP + ADP. The sequence is that of Cytidylate kinase (cmk) from Methanosarcina mazei (strain ATCC BAA-159 / DSM 3647 / Goe1 / Go1 / JCM 11833 / OCM 88) (Methanosarcina frisia).